The primary structure comprises 57 residues: uncharacterized protein (57 aa).

A helical membrane pass occupies residues A34–V54.

The protein resides in the membrane. This is an uncharacterized protein from Dictyostelium discoideum (Social amoeba).